The chain runs to 192 residues: Peptide methionine sulfoxide reductase MsrA 1 (192 aa).

C25 is an active-site residue.

It belongs to the MsrA Met sulfoxide reductase family.

It carries out the reaction L-methionyl-[protein] + [thioredoxin]-disulfide + H2O = L-methionyl-(S)-S-oxide-[protein] + [thioredoxin]-dithiol. It catalyses the reaction [thioredoxin]-disulfide + L-methionine + H2O = L-methionine (S)-S-oxide + [thioredoxin]-dithiol. Functionally, has an important function as a repair enzyme for proteins that have been inactivated by oxidation. Catalyzes the reversible oxidation-reduction of methionine sulfoxide in proteins to methionine. This is Peptide methionine sulfoxide reductase MsrA 1 from Rhodopirellula baltica (strain DSM 10527 / NCIMB 13988 / SH1).